The sequence spans 232 residues: 2,3,4,5-tetrahydropyridine-2,6-dicarboxylate N-acetyltransferase (232 aa).

This sequence belongs to the transferase hexapeptide repeat family. DapH subfamily.

The enzyme catalyses (S)-2,3,4,5-tetrahydrodipicolinate + acetyl-CoA + H2O = L-2-acetamido-6-oxoheptanedioate + CoA. The protein operates within amino-acid biosynthesis; L-lysine biosynthesis via DAP pathway; LL-2,6-diaminopimelate from (S)-tetrahydrodipicolinate (acetylase route): step 1/3. In terms of biological role, catalyzes the transfer of an acetyl group from acetyl-CoA to tetrahydrodipicolinate. This is 2,3,4,5-tetrahydropyridine-2,6-dicarboxylate N-acetyltransferase from Streptococcus pneumoniae (strain Taiwan19F-14).